A 252-amino-acid polypeptide reads, in one-letter code: Chitooligosaccharide deacetylase (252 aa).

Mg(2+) contacts are provided by His-61 and His-125.

It belongs to the YdjC deacetylase family. ChbG subfamily. In terms of assembly, homodimer. It depends on Mg(2+) as a cofactor.

Its subcellular location is the cytoplasm. It carries out the reaction N,N'-diacetylchitobiose + H2O = N-acetyl-beta-D-glucosaminyl-(1-&gt;4)-D-glucosamine + acetate. It catalyses the reaction diacetylchitobiose-6'-phosphate + H2O = N'-monoacetylchitobiose-6'-phosphate + acetate. It participates in glycan degradation; chitin degradation. Functionally, involved in the degradation of chitin. ChbG is essential for growth on the acetylated chitooligosaccharides chitobiose and chitotriose but is dispensable for growth on cellobiose and chitosan dimer, the deacetylated form of chitobiose. Deacetylation of chitobiose-6-P and chitotriose-6-P is necessary for both the activation of the chb promoter by the regulatory protein ChbR and the hydrolysis of phosphorylated beta-glucosides by the phospho-beta-glucosidase ChbF. Catalyzes the removal of only one acetyl group from chitobiose-6-P to yield monoacetylchitobiose-6-P, the inducer of ChbR and the substrate of ChbF. This is Chitooligosaccharide deacetylase from Enterobacter sp. (strain 638).